A 102-amino-acid chain; its full sequence is Large ribosomal subunit protein bL21 (102 aa).

A compositionally biased stretch (basic residues) spans 77–88 (KPKKHTHTKQGH). Residues 77–102 (KPKKHTHTKQGHRQPYTKVTINKINA) form a disordered region. Residues 93–102 (TKVTINKINA) show a composition bias toward polar residues.

Belongs to the bacterial ribosomal protein bL21 family. As to quaternary structure, part of the 50S ribosomal subunit. Contacts protein L20.

Its function is as follows. This protein binds to 23S rRNA in the presence of protein L20. This chain is Large ribosomal subunit protein bL21, found in Limosilactobacillus reuteri (strain DSM 20016) (Lactobacillus reuteri).